We begin with the raw amino-acid sequence, 308 residues long: UDP-N-acetylenolpyruvoylglucosamine reductase (308 aa).

An FAD-binding PCMH-type domain is found at 22–185; that stretch reads RVGGPADWLF…TEATFRAEAG (164 aa). Residue Arg165 is part of the active site. The span at 197–211 shows a compositional bias: basic and acidic residues; sequence QIARRDSSQPTKERS. A disordered region spans residues 197 to 228; it reads QIARRDSSQPTKERSAGSTFRNPAGFSSTGRA. Polar residues predominate over residues 212-226; that stretch reads AGSTFRNPAGFSSTG. Catalysis depends on Ser214, which acts as the Proton donor. Glu296 is an active-site residue.

It belongs to the MurB family. The cofactor is FAD.

The protein localises to the cytoplasm. It catalyses the reaction UDP-N-acetyl-alpha-D-muramate + NADP(+) = UDP-N-acetyl-3-O-(1-carboxyvinyl)-alpha-D-glucosamine + NADPH + H(+). The protein operates within cell wall biogenesis; peptidoglycan biosynthesis. Functionally, cell wall formation. The sequence is that of UDP-N-acetylenolpyruvoylglucosamine reductase from Cereibacter sphaeroides (strain ATCC 17023 / DSM 158 / JCM 6121 / CCUG 31486 / LMG 2827 / NBRC 12203 / NCIMB 8253 / ATH 2.4.1.) (Rhodobacter sphaeroides).